A 79-amino-acid chain; its full sequence is Large ribosomal subunit protein uL29 (79 aa).

Belongs to the universal ribosomal protein uL29 family.

The sequence is that of Large ribosomal subunit protein uL29 from Gluconacetobacter diazotrophicus (strain ATCC 49037 / DSM 5601 / CCUG 37298 / CIP 103539 / LMG 7603 / PAl5).